Consider the following 273-residue polypeptide: Outer surface protein A (273 aa).

An N-terminal signal peptide occupies residues 1–16 (MKKYLLGIGLILALIA). The N-palmitoyl cysteine moiety is linked to residue C17. The S-diacylglycerol cysteine moiety is linked to residue C17.

Belongs to the OspA lipoprotein family.

It localises to the cell outer membrane. Its subcellular location is the cell surface. This is Outer surface protein A from Borreliella burgdorferi (Lyme disease spirochete).